A 236-amino-acid polypeptide reads, in one-letter code: E3 ubiquitin-protein ligase ATL41 (236 aa).

A helical membrane pass occupies residues 31–51 (IMLAAVASLSGVILIVFALHL). The segment at 108–150 (CAVCLSVLKEQDKARELPNCKHIFHVDCVDTWLTTCSTCPVCR) adopts an RING-type; atypical zinc-finger fold.

It belongs to the RING-type zinc finger family. ATL subfamily.

It is found in the membrane. The catalysed reaction is S-ubiquitinyl-[E2 ubiquitin-conjugating enzyme]-L-cysteine + [acceptor protein]-L-lysine = [E2 ubiquitin-conjugating enzyme]-L-cysteine + N(6)-ubiquitinyl-[acceptor protein]-L-lysine.. It functions in the pathway protein modification; protein ubiquitination. Functionally, E3 ubiquitin-protein ligase able to catalyze polyubiquitination with ubiquitin-conjugating enzyme E2 UBC8, UBC10, UBC11, UBC28, UBC29, UBC30, UBC35 and UBC36 in vitro. In Arabidopsis thaliana (Mouse-ear cress), this protein is E3 ubiquitin-protein ligase ATL41 (ATL41).